Reading from the N-terminus, the 399-residue chain is Dihydrolipoyllysine-residue succinyltransferase component of 2-oxoglutarate dehydrogenase complex (399 aa).

Residues 2–77 enclose the Lipoyl-binding domain; sequence AIDIKAPTFP…LSGELLGKLT (76 aa). Lys-43 is modified (N6-lipoyllysine). A Peripheral subunit-binding (PSBD) domain is found at 104–141; the sequence is ILSPAARKIAEENAIAADSITGTGKGGRVTKEDAVAAA. Residues His-370 and Asp-374 contribute to the active site.

It belongs to the 2-oxoacid dehydrogenase family. Forms a 24-polypeptide structural core with octahedral symmetry. Part of the 2-oxoglutarate dehydrogenase (OGDH) complex composed of E1 (2-oxoglutarate dehydrogenase), E2 (dihydrolipoamide succinyltransferase) and E3 (dihydrolipoamide dehydrogenase); the complex contains multiple copies of the three enzymatic components (E1, E2 and E3). (R)-lipoate serves as cofactor.

It carries out the reaction N(6)-[(R)-dihydrolipoyl]-L-lysyl-[protein] + succinyl-CoA = N(6)-[(R)-S(8)-succinyldihydrolipoyl]-L-lysyl-[protein] + CoA. Its pathway is amino-acid degradation; L-lysine degradation via saccharopine pathway; glutaryl-CoA from L-lysine: step 6/6. Its function is as follows. E2 component of the 2-oxoglutarate dehydrogenase (OGDH) complex which catalyzes the second step in the conversion of 2-oxoglutarate to succinyl-CoA and CO(2). The protein is Dihydrolipoyllysine-residue succinyltransferase component of 2-oxoglutarate dehydrogenase complex (sucB) of Azotobacter vinelandii.